Here is a 291-residue protein sequence, read N- to C-terminus: 4-hydroxy-tetrahydrodipicolinate synthase (291 aa).

Residue Thr-44 participates in pyruvate binding. The active-site Proton donor/acceptor is the Tyr-132. Catalysis depends on Lys-160, which acts as the Schiff-base intermediate with substrate. Pyruvate is bound at residue Val-202.

The protein belongs to the DapA family. In terms of assembly, homotetramer; dimer of dimers.

The protein resides in the cytoplasm. It catalyses the reaction L-aspartate 4-semialdehyde + pyruvate = (2S,4S)-4-hydroxy-2,3,4,5-tetrahydrodipicolinate + H2O + H(+). Its pathway is amino-acid biosynthesis; L-lysine biosynthesis via DAP pathway; (S)-tetrahydrodipicolinate from L-aspartate: step 3/4. In terms of biological role, catalyzes the condensation of (S)-aspartate-beta-semialdehyde [(S)-ASA] and pyruvate to 4-hydroxy-tetrahydrodipicolinate (HTPA). This is 4-hydroxy-tetrahydrodipicolinate synthase from Clostridium perfringens (strain 13 / Type A).